We begin with the raw amino-acid sequence, 147 residues long: Deoxyuridine 5'-triphosphate nucleotidohydrolase (147 aa).

Substrate is bound by residues R68–G70, N81, and T85–D87.

It belongs to the dUTPase family. Mg(2+) is required as a cofactor.

It carries out the reaction dUTP + H2O = dUMP + diphosphate + H(+). It participates in pyrimidine metabolism; dUMP biosynthesis; dUMP from dCTP (dUTP route): step 2/2. This enzyme is involved in nucleotide metabolism: it produces dUMP, the immediate precursor of thymidine nucleotides and it decreases the intracellular concentration of dUTP so that uracil cannot be incorporated into DNA. In Solibacter usitatus (strain Ellin6076), this protein is Deoxyuridine 5'-triphosphate nucleotidohydrolase.